The chain runs to 164 residues: Reticulon-like protein B22 (164 aa).

The Reticulon domain occupies 1-164 (MGEMGKAMGL…ILEQEAHSDT (164 aa)). Transmembrane regions (helical) follow at residues 30 to 50 (SLFS…GLLF) and 117 to 137 (LISG…SMLC).

It localises to the endoplasmic reticulum membrane. The protein is Reticulon-like protein B22 (RTNLB22) of Arabidopsis thaliana (Mouse-ear cress).